The primary structure comprises 28 residues: 3-phytase B (28 aa).

A disordered region spans residues 1-28; sequence RDPTGCEVDQVIMVKRHGERYPSPSAGK. The active-site Nucleophile is histidine 17.

It belongs to the histidine acid phosphatase family.

The enzyme catalyses 1D-myo-inositol hexakisphosphate + H2O = 1D-myo-inositol 1,2,4,5,6-pentakisphosphate + phosphate. Catalyzes the hydrolysis of inorganic orthophosphate from phytate. The polypeptide is 3-phytase B (phyB) (Aspergillus ficuum).